A 1243-amino-acid chain; its full sequence is DNA polymerase II large subunit (1243 aa).

The protein belongs to the archaeal DNA polymerase II family. As to quaternary structure, heterodimer of a large subunit and a small subunit.

It catalyses the reaction DNA(n) + a 2'-deoxyribonucleoside 5'-triphosphate = DNA(n+1) + diphosphate. The enzyme catalyses Exonucleolytic cleavage in the 3'- to 5'-direction to yield nucleoside 5'-phosphates.. In terms of biological role, possesses two activities: a DNA synthesis (polymerase) and an exonucleolytic activity that degrades single-stranded DNA in the 3'- to 5'-direction. Has a template-primer preference which is characteristic of a replicative DNA polymerase. This Nanoarchaeum equitans (strain Kin4-M) protein is DNA polymerase II large subunit.